The following is a 359-amino-acid chain: tRNA-specific 2-thiouridylase MnmA (359 aa).

Residues 9 to 16 and Met-35 contribute to the ATP site; that span reads GMSGGVDS. The active-site Nucleophile is Cys-105. Residues Cys-105 and Cys-203 are joined by a disulfide bond. Gly-129 serves as a coordination point for ATP. The interval 153–155 is interaction with tRNA; sequence KDQ. Cys-203 acts as the Cysteine persulfide intermediate in catalysis. The segment at 309–310 is interaction with tRNA; the sequence is RY.

It belongs to the MnmA/TRMU family.

It localises to the cytoplasm. The enzyme catalyses S-sulfanyl-L-cysteinyl-[protein] + uridine(34) in tRNA + AH2 + ATP = 2-thiouridine(34) in tRNA + L-cysteinyl-[protein] + A + AMP + diphosphate + H(+). Catalyzes the 2-thiolation of uridine at the wobble position (U34) of tRNA, leading to the formation of s(2)U34. This is tRNA-specific 2-thiouridylase MnmA from Acetivibrio thermocellus (strain ATCC 27405 / DSM 1237 / JCM 9322 / NBRC 103400 / NCIMB 10682 / NRRL B-4536 / VPI 7372) (Clostridium thermocellum).